Here is an 817-residue protein sequence, read N- to C-terminus: Neurabin-2 (817 aa).

Disordered stretches follow at residues 1–52 (MMKT…KYGS) and 64–163 (MGTT…GGDK). 2 actin-binding regions span residues 1-154 (MMKT…FERS) and 164-282 (EAVA…QHRV). Serine 15 is modified (phosphoserine; by MAPK1). Phosphoserine; by CDK5 is present on serine 17. At serine 94 the chain carries Phosphoserine; by PKA. Residues serine 100 and serine 116 each carry the phosphoserine modification. The interval 100–371 (SLNENVDHSA…LERGVDNGRA (272 aa)) is interaction with D(2) dopamine receptor. The span at 131 to 141 (SAQPAPPPHPP) shows a compositional bias: pro residues. Positions 169–255 (RLLRQERAGL…KRSRVFQPPP (87 aa)) are interaction with ADRA2A, ADRA2B and ADRA2C. Residue serine 192 is modified to Phosphoserine. Threonine 193 carries the post-translational modification Phosphothreonine. Residue serine 205 is modified to Phosphoserine; by MAPK1. Threonine 207 bears the Phosphothreonine mark. The segment at 216 to 451 (EKADSRTGLH…DPAPSRKIHF (236 aa)) is disordered. A compositionally biased stretch (basic and acidic residues) spans 290–301 (KPREVRKIKPVE). Low complexity-rich tracts occupy residues 332–341 (STPATTASPA) and 399–409 (SGLGEDSGGSA). The span at 410 to 425 (LEEDDEEDEEDGEPPY) shows a compositional bias: acidic residues. The interaction with protein phosphatase 1 stretch occupies residues 417-494 (DEEDGEPPYE…LEKRVERLEL (78 aa)). A Phosphoserine modification is found at serine 438. Positions 447–451 (RKIHF) match the PP1-binding motif motif. Residues 480–525 (SAEYELEKRVERLELFPVELEKDSEGLGISIIGMGAGADMGLEKLG) form an interaction with RGS2 region. A PDZ domain is found at 496-584 (PVELEKDSEG…RVRFMIGRER (89 aa)). Residues 595–616 (IQQTLEQERWQREMMEQRYAQY) are a coiled coil. An interaction with TGN38 region spans residues 595-816 (IQQTLEQERW…NLQTLRNSNS (222 aa)). Serine 658 is subject to Phosphoserine. Residues 665–816 (EKLVHKFKEL…NLQTLRNSNS (152 aa)) are a coiled coil.

As to quaternary structure, possibly exists as a homodimer, homotrimer or a homotetramer. Interacts with F-actin, PPP1CA, neurabin-1, TGN38 and D(2) dopamine receptor. Interacts with RGS1, RGS2, RGS4, RGS19 and ADRA1B, ADRA2A, ADRA2B, ADRA2C, CDKN2A, PPP1R2, RASGFR1 and TIAM1. Interacts (via C-terminus) with SPATA13 (via C-terminal tail). Interacts with DCLK2. Interacts with ADRA2B. Stimulation of D1 (but not D2) dopamine receptors induces Ser-94 phosphorylation. Dephosphorylation of Ser-94 is mediated mainly by PP1 and to a lesser extent by PP2A. Phosphorylation of spinophilin disrupts its association with F-actin, but does not affect its binding to PP1.

It localises to the cytoplasm. The protein resides in the cytoskeleton. The protein localises to the nucleus. Its subcellular location is the postsynaptic density. It is found in the cell junction. It localises to the adherens junction. The protein resides in the cell projection. The protein localises to the dendritic spine. Its subcellular location is the cell membrane. It is found in the lamellipodium. It localises to the filopodium. The protein resides in the ruffle membrane. In terms of biological role, seems to act as a scaffold protein in multiple signaling pathways. Modulates excitatory synaptic transmission and dendritic spine morphology. Binds to actin filaments (F-actin) and shows cross-linking activity. Binds along the sides of the F-actin. May play an important role in linking the actin cytoskeleton to the plasma membrane at the synaptic junction. Believed to target protein phosphatase 1/PP1 to dendritic spines, which are rich in F-actin, and regulates its specificity toward ion channels and other substrates, such as AMPA-type and NMDA-type glutamate receptors. Plays a role in regulation of G-protein coupled receptor signaling, including dopamine D2 receptors and alpha-adrenergic receptors. May establish a signaling complex for dopaminergic neurotransmission through D2 receptors by linking receptors downstream signaling molecules and the actin cytoskeleton. Binds to ADRA1B and RGS2 and mediates regulation of ADRA1B signaling. May confer to Rac signaling specificity by binding to both, RacGEFs and Rac effector proteins. Probably regulates p70 S6 kinase activity by forming a complex with TIAM1. Required for hepatocyte growth factor (HGF)-induced cell migration. In Mus musculus (Mouse), this protein is Neurabin-2 (Ppp1r9b).